The primary structure comprises 317 residues: Beta-ketoacyl-[acyl-carrier-protein] synthase III (317 aa).

Active-site residues include C112 and H244. Positions 245–249 (QANLR) are ACP-binding. The active site involves N274.

It belongs to the thiolase-like superfamily. FabH family. In terms of assembly, homodimer.

It localises to the cytoplasm. The enzyme catalyses malonyl-[ACP] + acetyl-CoA + H(+) = 3-oxobutanoyl-[ACP] + CO2 + CoA. Its pathway is lipid metabolism; fatty acid biosynthesis. Its function is as follows. Catalyzes the condensation reaction of fatty acid synthesis by the addition to an acyl acceptor of two carbons from malonyl-ACP. Catalyzes the first condensation reaction which initiates fatty acid synthesis and may therefore play a role in governing the total rate of fatty acid production. Possesses both acetoacetyl-ACP synthase and acetyl transacylase activities. Its substrate specificity determines the biosynthesis of branched-chain and/or straight-chain of fatty acids. In Salmonella paratyphi A (strain ATCC 9150 / SARB42), this protein is Beta-ketoacyl-[acyl-carrier-protein] synthase III.